The chain runs to 118 residues: UPF0058 protein MJ1132 (118 aa).

This sequence belongs to the UPF0058 family.

In Methanocaldococcus jannaschii (strain ATCC 43067 / DSM 2661 / JAL-1 / JCM 10045 / NBRC 100440) (Methanococcus jannaschii), this protein is UPF0058 protein MJ1132.